The following is a 283-amino-acid chain: Shikimate dehydrogenase (NADP(+)) (283 aa).

Shikimate is bound by residues 19–21 and Thr-66; that span reads SRS. The active-site Proton acceptor is the Lys-70. Glu-82 is an NADP(+) binding site. Residues Asn-91 and Asp-107 each coordinate shikimate. NADP(+)-binding positions include 133-137 and Ile-226; that span reads GAGGA. Position 228 (Tyr-228) interacts with shikimate. Position 249 (Gly-249) interacts with NADP(+).

It belongs to the shikimate dehydrogenase family. In terms of assembly, homodimer.

It carries out the reaction shikimate + NADP(+) = 3-dehydroshikimate + NADPH + H(+). Its pathway is metabolic intermediate biosynthesis; chorismate biosynthesis; chorismate from D-erythrose 4-phosphate and phosphoenolpyruvate: step 4/7. Functionally, involved in the biosynthesis of the chorismate, which leads to the biosynthesis of aromatic amino acids. Catalyzes the reversible NADPH linked reduction of 3-dehydroshikimate (DHSA) to yield shikimate (SA). The chain is Shikimate dehydrogenase (NADP(+)) from Rhodospirillum rubrum (strain ATCC 11170 / ATH 1.1.1 / DSM 467 / LMG 4362 / NCIMB 8255 / S1).